Here is a 402-residue protein sequence, read N- to C-terminus: Phosphoglycerate kinase (402 aa).

Residues 24 to 26 (DFN), arginine 40, 63 to 66 (HFGR), arginine 122, and arginine 155 each bind substrate. Residues lysine 206, glycine 297, glutamate 328, and 357–360 (GGDS) each bind ATP.

It belongs to the phosphoglycerate kinase family. Monomer.

The protein localises to the cytoplasm. It carries out the reaction (2R)-3-phosphoglycerate + ATP = (2R)-3-phospho-glyceroyl phosphate + ADP. The protein operates within carbohydrate degradation; glycolysis; pyruvate from D-glyceraldehyde 3-phosphate: step 2/5. The protein is Phosphoglycerate kinase of Parasynechococcus marenigrum (strain WH8102).